The chain runs to 152 residues: Aspartate carbamoyltransferase regulatory chain (152 aa).

Residues Cys108, Cys113, Cys136, and Cys139 each contribute to the Zn(2+) site.

This sequence belongs to the PyrI family. Contains catalytic and regulatory chains. Zn(2+) is required as a cofactor.

Its function is as follows. Involved in allosteric regulation of aspartate carbamoyltransferase. This chain is Aspartate carbamoyltransferase regulatory chain, found in Thermococcus kodakarensis (strain ATCC BAA-918 / JCM 12380 / KOD1) (Pyrococcus kodakaraensis (strain KOD1)).